The primary structure comprises 364 residues: Dihydroorotate dehydrogenase (quinone) (364 aa).

Residues 78-82 (AGFDK) and threonine 102 each bind FMN. Lysine 82 contacts substrate. 127–131 (NRMGF) contributes to the substrate binding site. 2 residues coordinate FMN: asparagine 156 and asparagine 189. Asparagine 189 provides a ligand contact to substrate. Catalysis depends on serine 192, which acts as the Nucleophile. Residue asparagine 194 participates in substrate binding. Residues lysine 227 and threonine 255 each contribute to the FMN site. Substrate is bound at residue 256 to 257 (NT). FMN contacts are provided by residues glycine 285, glycine 314, and 335–336 (YT).

This sequence belongs to the dihydroorotate dehydrogenase family. Type 2 subfamily. As to quaternary structure, monomer. It depends on FMN as a cofactor.

It localises to the cell membrane. It carries out the reaction (S)-dihydroorotate + a quinone = orotate + a quinol. It functions in the pathway pyrimidine metabolism; UMP biosynthesis via de novo pathway; orotate from (S)-dihydroorotate (quinone route): step 1/1. In terms of biological role, catalyzes the conversion of dihydroorotate to orotate with quinone as electron acceptor. The sequence is that of Dihydroorotate dehydrogenase (quinone) from Thermosynechococcus vestitus (strain NIES-2133 / IAM M-273 / BP-1).